Consider the following 179-residue polypeptide: Large ribosomal subunit protein uL5 (179 aa).

The protein belongs to the universal ribosomal protein uL5 family. As to quaternary structure, part of the 50S ribosomal subunit; part of the 5S rRNA/L5/L18/L25 subcomplex. Contacts the 5S rRNA and the P site tRNA. Forms a bridge to the 30S subunit in the 70S ribosome.

Its function is as follows. This is one of the proteins that bind and probably mediate the attachment of the 5S RNA into the large ribosomal subunit, where it forms part of the central protuberance. In the 70S ribosome it contacts protein S13 of the 30S subunit (bridge B1b), connecting the 2 subunits; this bridge is implicated in subunit movement. Contacts the P site tRNA; the 5S rRNA and some of its associated proteins might help stabilize positioning of ribosome-bound tRNAs. This Neisseria gonorrhoeae (strain ATCC 700825 / FA 1090) protein is Large ribosomal subunit protein uL5.